The chain runs to 1120 residues: Isoleucine--tRNA ligase (1120 aa).

A 'HIGH' region motif is present at residues 64 to 74; that stretch reads PFANGLPHYGH. The 'KMSKS' region signature appears at 647 to 651; the sequence is KLSKR. Residue Lys-650 coordinates ATP.

This sequence belongs to the class-I aminoacyl-tRNA synthetase family. IleS type 2 subfamily. As to quaternary structure, monomer. It depends on Zn(2+) as a cofactor.

The protein localises to the cytoplasm. It catalyses the reaction tRNA(Ile) + L-isoleucine + ATP = L-isoleucyl-tRNA(Ile) + AMP + diphosphate. Catalyzes the attachment of isoleucine to tRNA(Ile). As IleRS can inadvertently accommodate and process structurally similar amino acids such as valine, to avoid such errors it has two additional distinct tRNA(Ile)-dependent editing activities. One activity is designated as 'pretransfer' editing and involves the hydrolysis of activated Val-AMP. The other activity is designated 'posttransfer' editing and involves deacylation of mischarged Val-tRNA(Ile). In Ehrlichia canis (strain Jake), this protein is Isoleucine--tRNA ligase.